A 381-amino-acid chain; its full sequence is Translation initiation factor eIF2B subunit beta (381 aa).

Residues 125-148 form a disordered region; the sequence is LQKPEQPHQNRKNSSGSSSMKTKT. Residues 136 to 145 are compositionally biased toward polar residues; the sequence is KNSSGSSSMK.

The protein belongs to the eIF-2B alpha/beta/delta subunits family. In terms of assembly, component of the translation initiation factor 2B (eIF2B) complex which is a heterodecamer of two sets of five different subunits: alpha, beta, gamma, delta and epsilon. Subunits alpha, beta and delta comprise a regulatory subcomplex and subunits epsilon and gamma comprise a catalytic subcomplex. Within the complex, the hexameric regulatory complex resides at the center, with the two heterodimeric catalytic subcomplexes bound on opposite sides.

Its subcellular location is the cytoplasm. The protein resides in the cytosol. Functionally, acts as a component of the translation initiation factor 2B (eIF2B) complex, which catalyzes the exchange of GDP for GTP on the eukaryotic initiation factor 2 (eIF2) complex gamma subunit. Its guanine nucleotide exchange factor activity is repressed when bound to eIF2 complex phosphorylated on the alpha subunit, thereby limiting the amount of methionyl-initiator methionine tRNA available to the ribosome and consequently global translation is repressed. It activates the synthesis of GCN4 in yeast under amino acid starvation conditions by suppressing the inhibitory effects of multiple AUG codons present in the leader of GCN4 mRNA. It may promote either repression or activation of GCN4 expression depending on amino acid availability. GCD6 and GCD7 repress GCN4 expression at the translational level by ensuring that ribosomes which have translated UORF1 will reinitiate at UORF2, -3, or -4 and thus fail to reach the GCN4 start site. The chain is Translation initiation factor eIF2B subunit beta (GCD7) from Saccharomyces cerevisiae (strain ATCC 204508 / S288c) (Baker's yeast).